The sequence spans 165 residues: MTTRSTDQTEHLRALGQKTPYPAAGPSTDLLEAFPNRFPDRPYIVSIAFPEFTSLCPVTGQPDFATIVVEYIPDQFCVESKSFKVYMFAFRDHQSFMETITNTILDDMTTKLQPLWCRVKGLFTPRGGTQLHVFAERFKEVEPARAQALRDMVSEWKRENNRHGA.

The tract at residues methionine 1 to alanine 24 is disordered. Residue cysteine 56 is the Thioimide intermediate of the active site. The active-site Proton donor is aspartate 63. Residues valine 78 to serine 80 and methionine 97 to glutamate 98 each bind substrate.

The protein belongs to the GTP cyclohydrolase I family. QueF type 1 subfamily.

Its subcellular location is the cytoplasm. It carries out the reaction 7-aminomethyl-7-carbaguanine + 2 NADP(+) = 7-cyano-7-deazaguanine + 2 NADPH + 3 H(+). It participates in tRNA modification; tRNA-queuosine biosynthesis. Functionally, catalyzes the NADPH-dependent reduction of 7-cyano-7-deazaguanine (preQ0) to 7-aminomethyl-7-deazaguanine (preQ1). In Nitratidesulfovibrio vulgaris (strain ATCC 29579 / DSM 644 / CCUG 34227 / NCIMB 8303 / VKM B-1760 / Hildenborough) (Desulfovibrio vulgaris), this protein is NADPH-dependent 7-cyano-7-deazaguanine reductase.